The chain runs to 513 residues: MKFKLKGIIKLSKEVPGIEDDLEKFFTEAESDILRRGVPEGQEHEAAHIKSWRLEGDTLHIEMESGRRVRAHDGLLRLKKPLGQLLGPKYRVGVRGISVTDYTMEMKAPGVSGIPSLAELPFVEDAAITDGTIMVRFQPLEESDLRKHVFDRVVKHARTLVESSDDLTVQVTRATPGEIIARSRSRDFFFEGDPTEEAMRLGWVKKFPGRGQWFYGPKITALHRALEEFFIERIVKPLGFVECLFPKLIPLDIMNKMRYLEGLPEGMYYCSAPSRDPETFEEFKNELIINREVPMDLLKRGIKDPGYVIAPAQCEPFYQFLSHEVVSAEDLPVKFFDRSGWTYRWEAGGSKGLDRVHEFQRVELVWLAEPGETEEIRDRTVELSHDAADELELEWYTEVGDDPFYLEGRKVEERGIEFPDVPKYEMRLSLPGREKGVAVVSANVHGTHFIEGFSIREARNLNIWTGCTGIGLSRWIYGFLAQKGFETGNWPDFIGERVEGVENPRIITWPRQD.

Position 312 (Ala312) interacts with L-serine. Cys314 contributes to the Zn(2+) binding site. Arg344 lines the L-serine pocket. ATP contacts are provided by residues 344-346 (RWE) and 355-356 (RV). Residue 361–363 (RVE) participates in L-serine binding. Zn(2+) contacts are provided by Glu363 and Cys467. Arg474 provides a ligand contact to ATP.

This sequence belongs to the class-II aminoacyl-tRNA synthetase family. Type-2 seryl-tRNA synthetase subfamily. In terms of assembly, homodimer. Requires Zn(2+) as cofactor.

The protein resides in the cytoplasm. It carries out the reaction tRNA(Ser) + L-serine + ATP = L-seryl-tRNA(Ser) + AMP + diphosphate + H(+). The enzyme catalyses tRNA(Sec) + L-serine + ATP = L-seryl-tRNA(Sec) + AMP + diphosphate + H(+). The protein operates within aminoacyl-tRNA biosynthesis; selenocysteinyl-tRNA(Sec) biosynthesis; L-seryl-tRNA(Sec) from L-serine and tRNA(Sec): step 1/1. Its function is as follows. Catalyzes the attachment of serine to tRNA(Ser). Is also able to aminoacylate tRNA(Sec) with serine, to form the misacylated tRNA L-seryl-tRNA(Sec), which will be further converted into selenocysteinyl-tRNA(Sec). The protein is Type-2 serine--tRNA ligase (serS) of Methanothermobacter thermautotrophicus (strain ATCC 29096 / DSM 1053 / JCM 10044 / NBRC 100330 / Delta H) (Methanobacterium thermoautotrophicum).